The following is a 106-amino-acid chain: COX assembly mitochondrial protein homolog (106 aa).

Residue Ala-2 is modified to N-acetylalanine. The CHCH domain maps to 28-71 (KERCSEQVQDFTKCCKNSGVLMVVKCRKENSALKECLTAYYNDP). 2 short sequence motifs (cx9C motif) span residues 31–41 (CSEQVQDFTKC) and 53–63 (CRKENSALKEC). Disulfide bonds link Cys-31-Cys-63 and Cys-41-Cys-53.

The protein belongs to the CMC family. Component of the MITRAC (mitochondrial translation regulation assembly intermediate of cytochrome c oxidase complex) complex, the core components of this complex being COA3/MITRAC12 and COX14.

It localises to the mitochondrion. In terms of biological role, component of the MITRAC (mitochondrial translation regulation assembly intermediate of cytochrome c oxidase complex) complex, that regulates cytochrome c oxidase assembly. The chain is COX assembly mitochondrial protein homolog (CMC1) from Homo sapiens (Human).